Reading from the N-terminus, the 365-residue chain is 2-aminoethylphosphonate--pyruvate transaminase (365 aa).

Lysine 194 carries the post-translational modification N6-(pyridoxal phosphate)lysine.

This sequence belongs to the class-V pyridoxal-phosphate-dependent aminotransferase family. PhnW subfamily. Homodimer. The cofactor is pyridoxal 5'-phosphate.

The enzyme catalyses (2-aminoethyl)phosphonate + pyruvate = phosphonoacetaldehyde + L-alanine. Functionally, involved in phosphonate degradation. The polypeptide is 2-aminoethylphosphonate--pyruvate transaminase (Bacillus cereus (strain Q1)).